A 634-amino-acid chain; its full sequence is Probable potassium transport system protein Kup (634 aa).

12 helical membrane passes run 21–41 (IILSAIGVVFGDIGTSPLYTL), 58–78 (VLGILSLIFWAMMLVVTIKYV), 110–130 (IYIVGILGIFGTSLFFGDGII), 148–168 (PHMKAFVVPITLAVLILLFLC), 180–200 (FGPITFLWFIAIGVVGVYNII), 217–237 (FFLEHGWHSMFVLGAVVLAVT), 258–278 (WMYVVLPMLALNYLGQGALVL), 296–316 (GLYPMIALATAAAVIASQALI), 348–368 (IYVPTVNWTLLMLVILTVIGF), 377–397 (AYGVAVTGTMMITTVLMIIYA), 408–428 (LLMIAIVFIAVDGAFFYANII), and 432–452 (DGAWFPLLLGVVIFTFMRTWL).

It belongs to the HAK/KUP transporter (TC 2.A.72) family.

Its subcellular location is the cell inner membrane. It carries out the reaction K(+)(in) + H(+)(in) = K(+)(out) + H(+)(out). Transport of potassium into the cell. Likely operates as a K(+):H(+) symporter. The chain is Probable potassium transport system protein Kup from Xylella fastidiosa (strain Temecula1 / ATCC 700964).